A 461-amino-acid chain; its full sequence is BSD domain-containing protein 1 (461 aa).

Phosphoserine occurs at positions 123 and 197. The BSD domain occupies 177-229 (WLSQFCLEEKKGEISELLVGSPSIRALYTKMVPAAVSHSEFWHRYFYKVHQLE). Residues 239–384 (KQRAEQSISE…SGPEPRPPAR (146 aa)) form a disordered region. Over residues 250–259 (PGWEEEEEEL) the composition is skewed to acidic residues. Residues 295-318 (LVTPVEPPTEVTPSESSESVSLVT) are compositionally biased toward low complexity. The residue at position 387 (threonine 387) is a Phosphothreonine. The interval 398-430 (VFELNSDSGKSTPSNNGKKGSSTDISEDWEKDF) is disordered. The span at 402–421 (NSDSGKSTPSNNGKKGSSTD) shows a compositional bias: polar residues. Phosphoserine is present on residues serine 418, serine 419, and serine 449.

This is BSD domain-containing protein 1 (BSDC1) from Bos taurus (Bovine).